A 547-amino-acid chain; its full sequence is Chaperonin GroEL (547 aa).

ATP-binding positions include 30–33 (TLGP), Lys51, 87–91 (DGTTT), Gly415, and Asp496.

Belongs to the chaperonin (HSP60) family. Forms a cylinder of 14 subunits composed of two heptameric rings stacked back-to-back. Interacts with the co-chaperonin GroES.

The protein localises to the cytoplasm. The catalysed reaction is ATP + H2O + a folded polypeptide = ADP + phosphate + an unfolded polypeptide.. Its function is as follows. Together with its co-chaperonin GroES, plays an essential role in assisting protein folding. The GroEL-GroES system forms a nano-cage that allows encapsulation of the non-native substrate proteins and provides a physical environment optimized to promote and accelerate protein folding. The polypeptide is Chaperonin GroEL (Actinobacillus pleuropneumoniae serotype 5b (strain L20)).